The following is a 3119-amino-acid chain: Huntingtin (3119 aa).

The segment at 1 to 65 is disordered; the sequence is MATLEKLMKA…LPGPAEEPLH (65 aa). Position 9 is an N6-acetyllysine (Lys9). The span at 24–60 shows a compositional bias: pro residues; that stretch reads QPPPQAPPPPPPPPPQPPQPPPQGQPPPPPPPLPGPA. 2 positions are modified to N6-acetyllysine: Lys155 and Lys213. 2 HEAT repeats span residues 183 to 220 and 225 to 262; these read PYLV…SFGN and NEIK…HSRR. Lys322 is modified (N6-acetyllysine). Ser396, Ser398, and Ser411 each carry phosphoserine. The residue at position 421 (Lys421) is an N6-acetyllysine. Residues 470-481 are interaction with ZDHHC17; the sequence is GHDIITEQPRSQ. A disordered region spans residues 495–558; the sequence is DLTSAATDGD…DSAVTPSDSS (64 aa). A compositionally biased stretch (polar residues) spans 529 to 558; the sequence is DGTQASSPISDSSQTTTEGPDSAVTPSDSS. Gly530 carries N-myristoyl glycine lipidation. 2 positions are modified to phosphoserine: Ser620 and Ser623. 2 HEAT repeats span residues 782-819 and 882-920; these read FSLV…SLCS and KLQE…KLFY. The disordered stretch occupies residues 1146–1204; the sequence is KAALPSLTNPPSLSPIRRKGKEKEPGEQASTPMSPKKVGEASAASRQSDTSGPVTASKS. A compositionally biased stretch (low complexity) spans 1149–1160; sequence LPSLTNPPSLSP. 2 positions are modified to phosphoserine; by CDK5: Ser1159 and Ser1179. Over residues 1189 to 1204 the composition is skewed to polar residues; it reads ASRQSDTSGPVTASKS. An HEAT 5 repeat occupies 1404–1441; that stretch reads LFEPLVIKALKQYTTTTSVQLQKQVLDLLAQLVQLRVN. Phosphoserine is present on Ser1853. Residues 2372-2381 carry the Nuclear export signal motif; it reads IVISLARLPL. The interval 2610-2637 is disordered; it reads EEEWDEEEEEESDVPAPTSPPVSPVNSR. The span at 2611 to 2622 shows a compositional bias: acidic residues; sequence EEWDEEEEEESD.

The protein belongs to the huntingtin family. In terms of assembly, interacts with PFN1. Interacts through its N-terminus with PRPF40A. Interacts with PQBP1. Interacts with SETD2. Interacts with SH3GLB1. Interacts with SYVN. Interacts with TPR; the interaction is inhibited by forms of Huntingtin with expanded polyglutamine stretch. Interacts with ZDHHC13 (via ANK repeats). Interacts with ZDHHC17 (via ANK repeats). Interacts with F8A1/F8A2/F8A3. Found in a complex with F8A1/F8A2/F8A3, HTT and RAB5A; mediates the recruitment of HTT by RAB5A. Post-translationally, phosphorylation at Ser-1159 and Ser-1179 by CDK5 in response to DNA damage in nuclei of neurons protects neurons against polyglutamine expansion as well as DNA damage mediated toxicity. Cleaved by caspases downstream of the polyglutamine stretch. In terms of processing, myristoylated at Gly-530, following proteolytic cleavage at Asp-529. The highest level is seen throughout the brain, but it is also found in the stomach, heart, testis, adipose tissue, muscle, spleen, liver, and kidney.

Its subcellular location is the cytoplasm. The protein resides in the nucleus. The protein localises to the cytoplasmic vesicle. It is found in the autophagosome. May play a role in microtubule-mediated transport or vesicle function. Functionally, promotes the formation of autophagic vesicles. This chain is Huntingtin (Htt), found in Mus musculus (Mouse).